The following is a 226-amino-acid chain: Glycerol-3-phosphate acyltransferase (226 aa).

The next 6 membrane-spanning stretches (helical) occupy residues 1–21, 56–76, 102–122, 134–154, 159–178, and 182–197; these read MGLW…LGSF, GPGA…IALV, LVTL…FLGF, ILLA…AVVV, IVSL…MVVL, and LPYI…YVIL.

Belongs to the PlsY family. In terms of assembly, probably interacts with PlsX.

The protein localises to the cell inner membrane. The catalysed reaction is an acyl phosphate + sn-glycerol 3-phosphate = a 1-acyl-sn-glycero-3-phosphate + phosphate. Its pathway is lipid metabolism; phospholipid metabolism. Functionally, catalyzes the transfer of an acyl group from acyl-phosphate (acyl-PO(4)) to glycerol-3-phosphate (G3P) to form lysophosphatidic acid (LPA). This enzyme utilizes acyl-phosphate as fatty acyl donor, but not acyl-CoA or acyl-ACP. The polypeptide is Glycerol-3-phosphate acyltransferase (Trichormus variabilis (strain ATCC 29413 / PCC 7937) (Anabaena variabilis)).